We begin with the raw amino-acid sequence, 213 residues long: NADH dehydrogenase [ubiquinone] iron-sulfur protein 7, mitochondrial (213 aa).

A mitochondrion-targeting transit peptide spans 1–31; sequence MALIARNAKLLTGTAPFLQRAATIHTTLPSL. A compositionally biased stretch (low complexity) spans 30 to 42; it reads SLSQQPASSPATS. The disordered stretch occupies residues 30 to 52; that stretch reads SLSQQPASSPATSGGAQPPSMNT. 4 residues coordinate [4Fe-4S] cluster: Cys88, Cys89, Cys153, and Cys183.

The protein belongs to the complex I 20 kDa subunit family. Complex I is composed of about 45 different subunits. This is a component of the iron-sulfur (IP) fragment of the enzyme. Requires [4Fe-4S] cluster as cofactor.

It localises to the mitochondrion. It carries out the reaction a ubiquinone + NADH + 5 H(+)(in) = a ubiquinol + NAD(+) + 4 H(+)(out). Functionally, core subunit of the mitochondrial membrane respiratory chain NADH dehydrogenase (Complex I) that is believed to belong to the minimal assembly required for catalysis. Complex I functions in the transfer of electrons from NADH to the respiratory chain. The immediate electron acceptor for the enzyme is believed to be ubiquinone. In Solanum tuberosum (Potato), this protein is NADH dehydrogenase [ubiquinone] iron-sulfur protein 7, mitochondrial.